The chain runs to 169 residues: Type II secretion system protein H (169 aa).

A propeptide spans 1–29 (MRVARLPLLHPHRAAPVVRRQLRGSSLLE) (leader sequence). N-methylmethionine is present on Met-30. A helical membrane pass occupies residues 32-52 (LVIALIALAGVLAAAALTGGI).

Belongs to the GSP H family. As to quaternary structure, type II secretion is composed of four main components: the outer membrane complex, the inner membrane complex, the cytoplasmic secretion ATPase and the periplasm-spanning pseudopilus. Interacts with core component XpsG. Interacts with minor pseudopilins XpsI and XpsJ. In terms of processing, cleaved by prepilin peptidase. Post-translationally, methylated by prepilin peptidase at the amino group of the N-terminal phenylalanine once the leader sequence is cleaved by prepilin peptidase.

It localises to the cell inner membrane. Its function is as follows. Component of the type II secretion system required for the energy-dependent secretion of extracellular factors such as proteases and toxins from the periplasm. Part of the pseudopilus tip complex that is critical for the recognition and binding of secretion substrates. This Xanthomonas campestris pv. campestris (strain ATCC 33913 / DSM 3586 / NCPPB 528 / LMG 568 / P 25) protein is Type II secretion system protein H (xpsH).